The following is an 80-amino-acid chain: RNA-binding protein Hfq (80 aa).

One can recognise a Sm domain in the interval 10–69 (DPFLNVLRKEHIPVSIYLVNGIKLQGHIDSFDQYVVLLRNSVTQMVYKHAISTIVPGKAV).

It belongs to the Hfq family. In terms of assembly, homohexamer.

In terms of biological role, RNA chaperone that binds small regulatory RNA (sRNAs) and mRNAs to facilitate mRNA translational regulation in response to envelope stress, environmental stress and changes in metabolite concentrations. Also binds with high specificity to tRNAs. This is RNA-binding protein Hfq from Nitrosomonas eutropha (strain DSM 101675 / C91 / Nm57).